A 719-amino-acid chain; its full sequence is Phenylalanine--tRNA ligase beta subunit, chloroplastic (719 aa).

The 86-residue stretch at 318 to 403 folds into the B5 domain; sequence DHALNINLSI…RIYGYHKFRS (86 aa). Mg(2+) is bound by residues aspartate 381, aspartate 387, glutamate 390, and glutamate 391. The FDX-ACB domain maps to 625 to 718; sequence SKYPSIIRDL…IVKQLNLKIR (94 aa).

It belongs to the phenylalanyl-tRNA synthetase beta subunit family. Type 1 subfamily. As to quaternary structure, tetramer of two alpha and two beta subunits. The cofactor is Mg(2+).

The protein resides in the plastid. It is found in the chloroplast. It catalyses the reaction tRNA(Phe) + L-phenylalanine + ATP = L-phenylalanyl-tRNA(Phe) + AMP + diphosphate + H(+). The polypeptide is Phenylalanine--tRNA ligase beta subunit, chloroplastic (Pyropia yezoensis (Susabi-nori)).